The primary structure comprises 433 residues: Elongation factor 1-alpha (433 aa).

The tr-type G domain maps to 5 to 227 (KPHLNLVVIG…AFDFFKEPPR (223 aa)). Residues 14 to 21 (GHIDHGKS) form a G1 region. GTP is bound at residue 14–21 (GHIDHGKS). Ser-21 contributes to the Mg(2+) binding site. Positions 70-74 (GITID) are G2. The segment at 91–94 (DAPG) is G3. GTP is bound by residues 91–95 (DAPGH) and 153–156 (NKMD). Residues 153–156 (NKMD) are G4. The interval 192 to 194 (SAW) is G5.

This sequence belongs to the TRAFAC class translation factor GTPase superfamily. Classic translation factor GTPase family. EF-Tu/EF-1A subfamily.

It is found in the cytoplasm. It catalyses the reaction GTP + H2O = GDP + phosphate + H(+). Its function is as follows. GTP hydrolase that promotes the GTP-dependent binding of aminoacyl-tRNA to the A-site of ribosomes during protein biosynthesis. This is Elongation factor 1-alpha from Thermofilum pendens (strain DSM 2475 / Hrk 5).